Reading from the N-terminus, the 58-residue chain is Weak neurotoxin D2B (58 aa).

3 disulfide bridges follow: C3-C24, C17-C41, and C43-C54.

As to expression, expressed by the venom gland.

It localises to the secreted. Binds to muscle nicotinic acetylcholine receptor (nAChR) and inhibit acetylcholine from binding to the receptor, thereby impairing neuromuscular transmission. This chain is Weak neurotoxin D2B, found in Micrurus pyrrhocryptus (Coral snake).